The following is a 318-amino-acid chain: HPr kinase/phosphorylase (318 aa).

Residues H146 and K167 contribute to the active site. Residue 161–168 participates in ATP binding; sequence GESGLGKS. S168 contributes to the Mg(2+) binding site. D185 serves as the catalytic Proton acceptor; for phosphorylation activity. Proton donor; for dephosphorylation activity. The important for the catalytic mechanism of both phosphorylation and dephosphorylation stretch occupies residues 209 to 218; it reads LEVRGIGLLD. Mg(2+) is bound at residue E210. R252 is a catalytic residue. Residues 273–278 are important for the catalytic mechanism of dephosphorylation; it reads QVVAGR.

This sequence belongs to the HPrK/P family. In terms of assembly, homohexamer. Requires Mg(2+) as cofactor.

The enzyme catalyses [HPr protein]-L-serine + ATP = [HPr protein]-O-phospho-L-serine + ADP + H(+). The catalysed reaction is [HPr protein]-O-phospho-L-serine + phosphate + H(+) = [HPr protein]-L-serine + diphosphate. Its function is as follows. Catalyzes the ATP- as well as the pyrophosphate-dependent phosphorylation of a specific serine residue in HPr, a phosphocarrier protein of the phosphoenolpyruvate-dependent sugar phosphotransferase system (PTS). HprK/P also catalyzes the pyrophosphate-producing, inorganic phosphate-dependent dephosphorylation (phosphorolysis) of seryl-phosphorylated HPr (P-Ser-HPr). The chain is HPr kinase/phosphorylase from Acidovorax sp. (strain JS42).